A 255-amino-acid chain; its full sequence is Sporulation-specific N-acetylmuramoyl-L-alanine amidase (255 aa).

Positions 4 to 172 constitute a MurNAc-LAA domain; the sequence is IFIDPGHGGS…LARGHANGLE (169 aa). Zn(2+)-binding residues include H10, E24, and H79. The active site involves E141. Positions 180–254 constitute an SPOR domain; it reads TSSSGLYKVQ…AGFDAIVILE (75 aa). Repeat copies occupy residues 184–219 and 220–255. Residues 184–255 form a 2 X 35 AA approximate tandem repeats region; it reads GLYKVQIGAF…GFDAIVILES (72 aa).

This sequence belongs to the N-acetylmuramoyl-L-alanine amidase 3 family. The cofactor is Zn(2+).

The protein localises to the secreted. Its subcellular location is the cell wall. The catalysed reaction is Hydrolyzes the link between N-acetylmuramoyl residues and L-amino acid residues in certain cell-wall glycopeptides.. Inhibited by EDTA. Its function is as follows. Autolysins are involved in some important biological processes such as cell separation, cell-wall turnover, competence for genetic transformation, formation of the flagella - in particular of its basal body - and sporulation. CwlC is able to hydrolyze type A cell walls such as B.subtilis. Its main function is to lyze the mother cell wall peptidoglycan, playing a role during sporulation. This is Sporulation-specific N-acetylmuramoyl-L-alanine amidase (cwlC) from Bacillus subtilis (strain 168).